We begin with the raw amino-acid sequence, 430 residues long: MRVPINTITPDTPSAEVIGWAHEIRDLGGLAFLLIRDRTGIIQVTVPKKKVAPEIAETIRAISRESVVRVTGTVKPEGKAPGGRELIPDAIEIVSLSATPLPLDVAEKVPAELDTRLDNRFLDARRPRVSAIFKIRNAVQHATRNFFFENGFIEINTSKIVAAATEGGTELFPIAYFEKEAFLNQSPQLYKQMMMAAGFEKVYEIGPIFRAEEHNTTKHLNEATSIDIEVSFTDHLGVMQTLEDLIRDIYQFVDKTCSDAIADLGLDDFAVPEKGFPRLPYSEAIEIASATCEEDIAYGDDIGTAAERAIGEEMGRLYFIVDWPSSIRPYYAMPYENDPEICKAFDMMHPRMELSSGAQRVHQHDLLVEQIAKKGLNPENFEFYLNPFRFGMPPHAGWGLGAERLVTTMLGLPNVREAVLFPRDRHRVVP.

E166 lines the L-aspartate pocket. The tract at residues 188 to 191 (QLYK) is aspartate. An L-aspartate-binding site is contributed by R210. ATP contacts are provided by residues 210–212 (RAE), 218–220 (KHL), and E353. Positions 353 and 356 each coordinate Mg(2+). S356 and R360 together coordinate L-aspartate. 401–404 (GAER) lines the ATP pocket.

The protein belongs to the class-II aminoacyl-tRNA synthetase family. Type 2 subfamily. Homodimer. It depends on Mg(2+) as a cofactor.

It localises to the cytoplasm. The enzyme catalyses tRNA(Asx) + L-aspartate + ATP = L-aspartyl-tRNA(Asx) + AMP + diphosphate. Its function is as follows. Aspartyl-tRNA synthetase with relaxed tRNA specificity since it is able to aspartylate not only its cognate tRNA(Asp) but also tRNA(Asn). Reaction proceeds in two steps: L-aspartate is first activated by ATP to form Asp-AMP and then transferred to the acceptor end of tRNA(Asp/Asn). In Methanospirillum hungatei JF-1 (strain ATCC 27890 / DSM 864 / NBRC 100397 / JF-1), this protein is Aspartate--tRNA(Asp/Asn) ligase.